The following is a 340-amino-acid chain: Dihydroorotate dehydrogenase (quinone) (340 aa).

FMN contacts are provided by residues 65-69 (AGADK) and T89. K69 contacts substrate. Residue 114-118 (NRNGF) participates in substrate binding. FMN-binding residues include N142 and N175. N175 contributes to the substrate binding site. S178 (nucleophile) is an active-site residue. Residue N180 participates in substrate binding. FMN is bound by residues K220 and T248. A substrate-binding site is contributed by 249-250 (NT). FMN-binding positions include G271, G300, and 321–322 (YS).

This sequence belongs to the dihydroorotate dehydrogenase family. Type 2 subfamily. Monomer. The cofactor is FMN.

It is found in the cell membrane. The catalysed reaction is (S)-dihydroorotate + a quinone = orotate + a quinol. The protein operates within pyrimidine metabolism; UMP biosynthesis via de novo pathway; orotate from (S)-dihydroorotate (quinone route): step 1/1. In terms of biological role, catalyzes the conversion of dihydroorotate to orotate with quinone as electron acceptor. The polypeptide is Dihydroorotate dehydrogenase (quinone) (Mannheimia succiniciproducens (strain KCTC 0769BP / MBEL55E)).